Consider the following 428-residue polypeptide: Putative zinc metalloprotease SACOL1281 (428 aa).

His-21 serves as a coordination point for Zn(2+). Residue Glu-22 is part of the active site. His-25 provides a ligand contact to Zn(2+). The next 4 helical transmembrane spans lie at 172–194 (FLTL…IGLA), 309–331 (GSTY…GFSF), 352–374 (IISL…LIPI), and 401–420 (TTII…LVTW). Residues 186–269 (ALVLFIGLAY…TKSVELTPKK (84 aa)) enclose the PDZ domain.

It belongs to the peptidase M50B family. The cofactor is Zn(2+).

The protein localises to the cell membrane. The chain is Putative zinc metalloprotease SACOL1281 from Staphylococcus aureus (strain COL).